A 595-amino-acid chain; its full sequence is TNF receptor-associated factor family protein DDB_G0272348 (595 aa).

The segment at 14–64 is disordered; it reads SFTNNNSNNNNNNNNNSNSNNNNNNNNNNINNNNNHNNNNKNNSNNKNEIN. Positions 17 to 64 are enriched in low complexity; the sequence is NNNSNNNNNNNNNSNSNNNNNNNNNNINNNNNHNNNNKNNSNNKNEIN. An RING-type; degenerate zinc finger spans residues 87–134; it reads CTICSDLLVNSFHADKFKAVQCKNGHYTTCLNCWEKHLEKKKNCIQCG. TRAF-type zinc fingers lie at residues 189–253 and 254–311; these read EHLK…INKE and SHNA…SKLS. Positions 348–410 form a coiled coil; it reads LLNGQNKKIT…QQQQSQQQQQ (63 aa). Low complexity predominate over residues 409–440; sequence QQSQQQQQSQQSQQNNNSNSHFINNNNNNINN. Positions 409-450 are disordered; sequence QQSQQQQQSQQSQQNNNSNSHFINNNNNNINNVQMSDSPNGG. A compositionally biased stretch (polar residues) spans 441 to 450; sequence VQMSDSPNGG. The region spanning 456–584 is the MATH domain; sequence VYKNKWVISN…NDSITIEIEI (129 aa).

This sequence belongs to the TNF receptor-associated factor family. A subfamily.

The protein localises to the cytoplasm. Its function is as follows. Probable adapter protein and signal transducer that links members of the tumor necrosis factor receptor family to different signaling pathways by association with the receptor cytoplasmic domain and kinases. The polypeptide is TNF receptor-associated factor family protein DDB_G0272348 (Dictyostelium discoideum (Social amoeba)).